A 219-amino-acid polypeptide reads, in one-letter code: GTP-binding protein drn-1 (219 aa).

GTP-binding positions include 37-44, 56-62, 85-89, 146-149, and 177-178; these read GAGGVGKS, NENYVPT, DTTGS, NKKD, and AK. The Effector region motif lies at 59–67; the sequence is YVPTIEDTY. Cys-216 is subject to Cysteine methyl ester. A lipid anchor (S-geranylgeranyl cysteine) is attached at Cys-216. Residues 217 to 219 constitute a propeptide, removed in mature form; that stretch reads HIM.

The protein belongs to the small GTPase superfamily. Di-Ras family. Interacts with epac-1 (via C-terminus). As to expression, expressed specifically in neurons including the nerve ring, ventral and dorsal nerve cord motor neurons and tail ganglia.

It is found in the cell membrane. In terms of biological role, displays low GTPase activity and exists predominantly in the GTP-bound form. Together with epac-1, may regulate acetylcholine release at the neuromuscular junctions probably downstream of G-protein gsa-1 and adenylate cyclase acy-1. The protein is GTP-binding protein drn-1 of Caenorhabditis elegans.